We begin with the raw amino-acid sequence, 193 residues long: Inosine triphosphate pyrophosphatase (193 aa).

ITP is bound at residue 10-15 (TGNANK). Glu-42 serves as a coordination point for Mg(2+). ITP contacts are provided by residues Lys-54, 70–71 (DT), Lys-87, 146–149 (FGWD), Lys-169, and 174–175 (HR).

It belongs to the HAM1 NTPase family. Homodimer. Requires Mg(2+) as cofactor. The cofactor is Mn(2+).

It localises to the cytoplasm. It is found in the nucleus. The catalysed reaction is ITP + H2O = IMP + diphosphate + H(+). It carries out the reaction dITP + H2O = dIMP + diphosphate + H(+). The enzyme catalyses XTP + H2O = XMP + diphosphate + H(+). Pyrophosphatase that hydrolyzes non-canonical purine nucleotides such as inosine triphosphate (ITP), deoxyinosine triphosphate (dITP) or xanthosine 5'-triphosphate (XTP) to their respective monophosphate derivatives. The enzyme does not distinguish between the deoxy- and ribose forms. Probably excludes non-canonical purines from RNA and DNA precursor pools, thus preventing their incorporation into RNA and DNA and avoiding chromosomal lesions. The protein is Inosine triphosphate pyrophosphatase of Mycosarcoma maydis (Corn smut fungus).